We begin with the raw amino-acid sequence, 328 residues long: MAKPAKRVAVTGAAGQIAYSLLFRIANGDLLGKDQPVILQLLDLPQAQGAVKGVVMELDDCAFPLLSGVVITDDPKVAFKDADVALLVGARPRSKGMERKDLLSANAEIFTVQGAALNEVASRDVKVLVVGNPANTNAYIAMKSAPDLPKKNFTAMLRLDHNRALSQLAAKSGKPVASIEKLAVWGNHSPTMYPDFRFATAEGESLLKLINDDVWNRDTFIPTVGKRGAAIIEARGLSSAASAANAAIDHVRDWVLGTNGKWVTMGIPSDGSYGIPEDIIYGVPVVCENGEYKRIEGLEIDAFSREKMDGTLAELLEERDGVAHLLKN.

Residue 12-18 (GAAGQIA) coordinates NAD(+). Residues Arg93 and Arg99 each contribute to the substrate site. Residues Asn106, Gln113, and 130–132 (VGN) each bind NAD(+). The substrate site is built by Asn132 and Arg163. His188 functions as the Proton acceptor in the catalytic mechanism.

It belongs to the LDH/MDH superfamily. MDH type 2 family.

The enzyme catalyses (S)-malate + NAD(+) = oxaloacetate + NADH + H(+). Functionally, catalyzes the reversible oxidation of malate to oxaloacetate. This chain is Malate dehydrogenase, found in Burkholderia lata (strain ATCC 17760 / DSM 23089 / LMG 22485 / NCIMB 9086 / R18194 / 383).